Here is a 527-residue protein sequence, read N- to C-terminus: MQKERVIMTNISTLNDVQKIIVLDYGSQYNQLIARRIREFGVFSELKSHKITADEVRAINPIGIILSGGPNSVYAEDAFGIDEEIFELGIPILGICYGMQLLTHKLGGKVVPAGEAGNREYGQSTLRLRAQSELFAGTPEEQVVLMSHGDAVTEIPEGFHLVADSVDCPFAAMEDTKKNFYGIQFHPEVRHTVYGNDILKNFAFSICGAKGDWSMANFVDMQIAQIRETVGDRKVLLGLSGGVDSSVVGVLLQKAIGDQLTCIFVDHGLLRKGEGDQVMEMLGGKFGLNIIRVDASKRFLDLLAGVDDPEKKRKIIGNEFVHVFDDEASKLKGVDFLAQGTLYTDIIESGTETAQTIKSHHNVGGLPEDMQFELIEPLNTLFKDEVRALGTELGMPDEVVWRQPFPGPGLAIRIMGEITEEKLETVRESDAILREEIAKAGLDRDVWQYFTVNTGVRSVGVMGDGRTYDYTIAIRAITSIDGMTADFAKLPWEVLQKISVRIVNEVDHVNRIVYDITSKPPATVEWE.

In terms of domain architecture, Glutamine amidotransferase type-1 spans 19-212 (KIIVLDYGSQ…AFSICGAKGD (194 aa)). The Nucleophile role is filled by C96. Residues H186 and E188 contribute to the active site. The region spanning 213 to 402 (WSMANFVDMQ…LGMPDEVVWR (190 aa)) is the GMPS ATP-PPase domain. 240 to 246 (SGGVDSS) provides a ligand contact to ATP.

As to quaternary structure, homodimer.

It carries out the reaction XMP + L-glutamine + ATP + H2O = GMP + L-glutamate + AMP + diphosphate + 2 H(+). Its pathway is purine metabolism; GMP biosynthesis; GMP from XMP (L-Gln route): step 1/1. In terms of biological role, catalyzes the synthesis of GMP from XMP. In Streptococcus thermophilus (strain ATCC BAA-250 / LMG 18311), this protein is GMP synthase [glutamine-hydrolyzing].